Reading from the N-terminus, the 131-residue chain is Bypass of stop codon protein 4 (131 aa).

The protein is Bypass of stop codon protein 4 (BSC4) of Saccharomyces cerevisiae (strain ATCC 204508 / S288c) (Baker's yeast).